Reading from the N-terminus, the 453-residue chain is uncharacterized protein (453 aa).

Positions 5–63 (LLKKNQSVELTIEDLTHDGSGVGKIDGYPLFIPNALPGEKITAKITKLNKNYGFARMEN) constitute a TRAM domain. Cys-76, Cys-82, Cys-85, and Cys-162 together coordinate [4Fe-4S] cluster. Residues Gln-285, Tyr-314, Glu-335, and Asp-383 each coordinate S-adenosyl-L-methionine. Cys-410 acts as the Nucleophile in catalysis.

Belongs to the class I-like SAM-binding methyltransferase superfamily. RNA M5U methyltransferase family.

This is an uncharacterized protein from Listeria innocua serovar 6a (strain ATCC BAA-680 / CLIP 11262).